The following is a 367-amino-acid chain: Otolith matrix protein 1 (367 aa).

Positions 1–23 (MDRLDRRLAATLLLFSFISFSTQ) are cleaved as a signal peptide. The Transferrin-like domain occupies 27–363 (ISWCVVSEAE…YTTVLQAFEC (337 aa)).

It belongs to the transferrin family. As to quaternary structure, interacts with OTOL1. In terms of tissue distribution, expressed in the sacculus during the day.

The protein localises to the secreted. Required for normal otolith growth and deposition of otolin-1 in the otolith. This Oncorhynchus mykiss (Rainbow trout) protein is Otolith matrix protein 1 (otomp).